A 264-amino-acid chain; its full sequence is MICOS complex subunit MIC27 (264 aa).

The N-terminal 27 residues, 1-27, are a transit peptide targeting the mitochondrion; that stretch reads MAALRMGKLTTMPTGLIYASISVHVAK. At 28-110 the chain is on the mitochondrial intermembrane side; that stretch reads EEESKKQLVK…YVYLKNPPRD (83 aa). A helical transmembrane segment spans residues 111-129; the sequence is FLPKIGVITVSGLAGFISA. Over 130 to 137 the chain is Mitochondrial matrix; it reads RKGSRFKR. The chain crosses the membrane as a helical span at residues 138–155; the sequence is IAYPLGLATLGATVCYPV. The Mitochondrial intermembrane segment spans residues 156-264; the sequence is QSVIIAKVAG…EDIDMYSTRS (109 aa). The segment covering 189 to 198 has biased composition (basic and acidic residues); sequence KLPEHKEKTK. Residues 189–264 are disordered; sequence KLPEHKEKTK…EDIDMYSTRS (76 aa). The span at 223–238 shows a compositional bias: low complexity; that stretch reads AELSSETKTKSTSGAT. The segment covering 245-256 has biased composition (basic and acidic residues); the sequence is KLMDHGQSHPED.

This sequence belongs to the apolipoprotein O/MICOS complex subunit Mic27 family. Component of the mitochondrial contact site and cristae organizing system (MICOS) complex, composed of at least MICOS10/MIC10, CHCHD3/MIC19, CHCHD6/MIC25, APOOL/MIC27, IMMT/MIC60, APOO/MIC23/MIC26 and QIL1/MIC13. This complex was also known under the names MINOS or MitOS complex. The MICOS complex associates with mitochondrial outer membrane proteins SAMM50, MTX1 and MTX2 (together described as components of the mitochondrial outer membrane sorting assembly machinery (SAM) complex) and DNAJC11, mitochondrial inner membrane protein TMEM11 and with HSPA9. The MICOS and SAM complexes together with DNAJC11 are part of a large protein complex spanning both membranes termed the mitochondrial intermembrane space bridging (MIB) complex. Interacts with MICOS10/MIC10, IMMT/MIC60 and APOO/MIC23/MIC26.

Its subcellular location is the mitochondrion inner membrane. It localises to the mitochondrion. Functionally, component of the MICOS complex, a large protein complex of the mitochondrial inner membrane that plays crucial roles in the maintenance of crista junctions, inner membrane architecture, and formation of contact sites to the outer membrane. Specifically binds to cardiolipin (in vitro) but not to the precursor lipid phosphatidylglycerol. Plays a crucial role in crista junction formation and mitochondrial function. The sequence is that of MICOS complex subunit MIC27 (APOL) from Bos taurus (Bovine).